The primary structure comprises 169 residues: Peptide deformylase 1 (169 aa).

Fe cation is bound by residues C93 and H135. The active site involves E136. H139 contributes to the Fe cation binding site.

Belongs to the polypeptide deformylase family. It depends on Fe(2+) as a cofactor.

The enzyme catalyses N-terminal N-formyl-L-methionyl-[peptide] + H2O = N-terminal L-methionyl-[peptide] + formate. In terms of biological role, removes the formyl group from the N-terminal Met of newly synthesized proteins. Requires at least a dipeptide for an efficient rate of reaction. N-terminal L-methionine is a prerequisite for activity but the enzyme has broad specificity at other positions. The protein is Peptide deformylase 1 of Corynebacterium efficiens (strain DSM 44549 / YS-314 / AJ 12310 / JCM 11189 / NBRC 100395).